Consider the following 92-residue polypeptide: Small ribosomal subunit protein uS19 (92 aa).

The disordered stretch occupies residues Glu73–Arg92.

Belongs to the universal ribosomal protein uS19 family.

Protein S19 forms a complex with S13 that binds strongly to the 16S ribosomal RNA. The polypeptide is Small ribosomal subunit protein uS19 (Maricaulis maris (strain MCS10) (Caulobacter maris)).